Reading from the N-terminus, the 416-residue chain is Probable endo-beta-1,4-glucanase celB (416 aa).

Residues 1–17 (MIWTLAPFVALLPLVTA) form the signal peptide. Asn45, Asn104, Asn117, and Asn135 each carry an N-linked (GlcNAc...) asparagine glycan. Residue Glu214 is the Nucleophile of the active site. The active-site Proton donor is Glu219. Residues Asn233, Asn278, Asn292, and Asn382 are each glycosylated (N-linked (GlcNAc...) asparagine).

The protein belongs to the glycosyl hydrolase 7 (cellulase C) family.

The protein resides in the secreted. The catalysed reaction is Endohydrolysis of (1-&gt;4)-beta-D-glucosidic linkages in cellulose, lichenin and cereal beta-D-glucans.. Its function is as follows. Has endoglucanase activity on substrates containing beta-1,4 glycosidic bonds, like in carboxymethylcellulose (CMC), hydroxyethylcellulose (HEC) and beta-glucan. Involved in the degradation of complex natural cellulosic substrates. The sequence is that of Probable endo-beta-1,4-glucanase celB (celB) from Aspergillus flavus (strain ATCC 200026 / FGSC A1120 / IAM 13836 / NRRL 3357 / JCM 12722 / SRRC 167).